A 1551-amino-acid chain; its full sequence is Pentafunctional AROM polypeptide (1551 aa).

The tract at residues 1-379 is 3-dehydroquinate synthase; the sequence is MSIEKVPILG…YQLKAHEVSK (379 aa). Residues 42–44, 80–83, 111–113, and aspartate 116 contribute to the NAD(+) site; these read DTN, ENNK, and GGV. Residue arginine 127 coordinates 7-phospho-2-dehydro-3-deoxy-D-arabino-heptonate. NAD(+) is bound at residue 136-137; that stretch reads TT. Positions 143 and 149 each coordinate 7-phospho-2-dehydro-3-deoxy-D-arabino-heptonate. NAD(+) is bound at residue lysine 158. Asparagine 159 provides a ligand contact to 7-phospho-2-dehydro-3-deoxy-D-arabino-heptonate. Residues 176 to 179 and asparagine 187 contribute to the NAD(+) site; that span reads YLES. Glutamate 191 is a Zn(2+) binding site. Residues 191-194 and lysine 243 each bind 7-phospho-2-dehydro-3-deoxy-D-arabino-heptonate; that span reads EVVK. Glutamate 253 acts as the Proton acceptor; for 3-dehydroquinate synthase activity in catalysis. Residues 257-261 and histidine 264 contribute to the 7-phospho-2-dehydro-3-deoxy-D-arabino-heptonate site; that span reads RNLLN. Histidine 264 contributes to the Zn(2+) binding site. Histidine 268 (proton acceptor; for 3-dehydroquinate synthase activity) is an active-site residue. Positions 280 and 351 each coordinate 7-phospho-2-dehydro-3-deoxy-D-arabino-heptonate. Zn(2+) is bound at residue histidine 280. The EPSP synthase stretch occupies residues 392–838; sequence VHPFKQPPQE…WDILHSKFNI (447 aa). Residues 858–1048 are shikimate kinase; sequence DKSIIIIGMR…IPSGRSAALS (191 aa). 865-872 provides a ligand contact to ATP; it reads GMRGTGKS. The interval 1049-1258 is 3-dehydroquinase; it reads LTVPDLNAIS…NEDGLLTIKE (210 aa). Lysine 1194 (schiff-base intermediate with substrate; for 3-dehydroquinate dehydratase activity) is an active-site residue. The segment at 1271–1551 is shikimate dehydrogenase; the sequence is AKKFWVIGSP…DVIHRAVVEE (281 aa).

This sequence in the N-terminal section; belongs to the sugar phosphate cyclases superfamily. Dehydroquinate synthase family. The protein in the 2nd section; belongs to the EPSP synthase family. In the 3rd section; belongs to the shikimate kinase family. It in the 4th section; belongs to the type-I 3-dehydroquinase family. This sequence in the C-terminal section; belongs to the shikimate dehydrogenase family. As to quaternary structure, homodimer. Zn(2+) is required as a cofactor.

It localises to the cytoplasm. It carries out the reaction 7-phospho-2-dehydro-3-deoxy-D-arabino-heptonate = 3-dehydroquinate + phosphate. The catalysed reaction is 3-dehydroquinate = 3-dehydroshikimate + H2O. It catalyses the reaction shikimate + NADP(+) = 3-dehydroshikimate + NADPH + H(+). The enzyme catalyses shikimate + ATP = 3-phosphoshikimate + ADP + H(+). It carries out the reaction 3-phosphoshikimate + phosphoenolpyruvate = 5-O-(1-carboxyvinyl)-3-phosphoshikimate + phosphate. It functions in the pathway metabolic intermediate biosynthesis; chorismate biosynthesis; chorismate from D-erythrose 4-phosphate and phosphoenolpyruvate: step 2/7. The protein operates within metabolic intermediate biosynthesis; chorismate biosynthesis; chorismate from D-erythrose 4-phosphate and phosphoenolpyruvate: step 3/7. Its pathway is metabolic intermediate biosynthesis; chorismate biosynthesis; chorismate from D-erythrose 4-phosphate and phosphoenolpyruvate: step 4/7. It participates in metabolic intermediate biosynthesis; chorismate biosynthesis; chorismate from D-erythrose 4-phosphate and phosphoenolpyruvate: step 5/7. It functions in the pathway metabolic intermediate biosynthesis; chorismate biosynthesis; chorismate from D-erythrose 4-phosphate and phosphoenolpyruvate: step 6/7. Functionally, the AROM polypeptide catalyzes 5 consecutive enzymatic reactions in prechorismate polyaromatic amino acid biosynthesis. The chain is Pentafunctional AROM polypeptide from Candida tropicalis (strain ATCC MYA-3404 / T1) (Yeast).